A 122-amino-acid chain; its full sequence is Probable F-box protein At4g23960 (122 aa).

The F-box domain maps to 1–45; it reads MIEQLFPEVTCYALRYLDYSSLCQLSMTSSSMRKTANDDVLWRAL.

The protein is Probable F-box protein At4g23960 of Arabidopsis thaliana (Mouse-ear cress).